Here is a 340-residue protein sequence, read N- to C-terminus: N-acetyl-gamma-glutamyl-phosphate reductase (340 aa).

C146 is an active-site residue.

Belongs to the NAGSA dehydrogenase family. Type 1 subfamily.

It is found in the cytoplasm. It catalyses the reaction N-acetyl-L-glutamate 5-semialdehyde + phosphate + NADP(+) = N-acetyl-L-glutamyl 5-phosphate + NADPH + H(+). Its pathway is amino-acid biosynthesis; L-arginine biosynthesis; N(2)-acetyl-L-ornithine from L-glutamate: step 3/4. In terms of biological role, catalyzes the NADPH-dependent reduction of N-acetyl-5-glutamyl phosphate to yield N-acetyl-L-glutamate 5-semialdehyde. In Streptococcus mutans serotype c (strain ATCC 700610 / UA159), this protein is N-acetyl-gamma-glutamyl-phosphate reductase.